We begin with the raw amino-acid sequence, 216 residues long: Ribosomal RNA small subunit methyltransferase G (216 aa).

Residues Gly73, Leu78, 124 to 125 (AE), and Arg139 contribute to the S-adenosyl-L-methionine site.

Belongs to the methyltransferase superfamily. RNA methyltransferase RsmG family.

It localises to the cytoplasm. Specifically methylates the N7 position of guanine in position 518 of 16S rRNA. In Arthrobacter sp. (strain FB24), this protein is Ribosomal RNA small subunit methyltransferase G.